The primary structure comprises 574 residues: Phospholipase B-like protein A (574 aa).

An N-terminal signal peptide occupies residues 1 to 20; the sequence is MRVIRSLLLLTIAIIGSVLS. N-linked (GlcNAc...) asparagine glycosylation is found at Asn-159, Asn-195, and Asn-415.

It belongs to the phospholipase B-like family.

The protein localises to the secreted. Phospholipase that removes both fatty-acid chains from phosphatidylcholine and produces the water-soluble glycerophosphorylcholine. In addition to phosphatidylcholine deacylation, it also hydrolyzes phosphatidylinositol and phosphatidylethanolamine. This chain is Phospholipase B-like protein A (plbA), found in Dictyostelium discoideum (Social amoeba).